Consider the following 447-residue polypeptide: Probable cytosol aminopeptidase (447 aa).

Mn(2+) is bound by residues Lys-218 and Asp-223. Lys-230 is an active-site residue. Residues Asp-241, Asp-300, and Glu-302 each coordinate Mn(2+). Residue Arg-304 is part of the active site.

It belongs to the peptidase M17 family. It depends on Mn(2+) as a cofactor.

The protein localises to the cytoplasm. The enzyme catalyses Release of an N-terminal amino acid, Xaa-|-Yaa-, in which Xaa is preferably Leu, but may be other amino acids including Pro although not Arg or Lys, and Yaa may be Pro. Amino acid amides and methyl esters are also readily hydrolyzed, but rates on arylamides are exceedingly low.. The catalysed reaction is Release of an N-terminal amino acid, preferentially leucine, but not glutamic or aspartic acids.. Functionally, presumably involved in the processing and regular turnover of intracellular proteins. Catalyzes the removal of unsubstituted N-terminal amino acids from various peptides. This Mycoplasma genitalium (strain ATCC 33530 / DSM 19775 / NCTC 10195 / G37) (Mycoplasmoides genitalium) protein is Probable cytosol aminopeptidase (pepA).